Reading from the N-terminus, the 259-residue chain is Putative zinc metalloprotease Rip2 (259 aa).

2 helical membrane passes run 14 to 34 (PIFL…WIAA) and 39 to 59 (PLSY…SLCL). Histidine 60 contacts Zn(2+). Residue glutamate 61 is part of the active site. Histidine 64 lines the Zn(2+) pocket. Helical transmembrane passes span 96–116 (LGLP…GAVY), 129–149 (IVSL…LGLT), 159–179 (VFWS…VLNL), and 203–223 (LAPA…TPAL).

It belongs to the peptidase M50B family. Requires Zn(2+) as cofactor.

It localises to the cell membrane. The chain is Putative zinc metalloprotease Rip2 (rip2) from Mycolicibacterium smegmatis (strain ATCC 700084 / mc(2)155) (Mycobacterium smegmatis).